A 190-amino-acid polypeptide reads, in one-letter code: Nucleoside triphosphate pyrophosphatase (190 aa).

The Proton acceptor role is filled by D69.

This sequence belongs to the Maf family. Requires a divalent metal cation as cofactor.

Its subcellular location is the cytoplasm. It catalyses the reaction a ribonucleoside 5'-triphosphate + H2O = a ribonucleoside 5'-phosphate + diphosphate + H(+). It carries out the reaction a 2'-deoxyribonucleoside 5'-triphosphate + H2O = a 2'-deoxyribonucleoside 5'-phosphate + diphosphate + H(+). Nucleoside triphosphate pyrophosphatase. May have a dual role in cell division arrest and in preventing the incorporation of modified nucleotides into cellular nucleic acids. This Helicobacter pylori (strain J99 / ATCC 700824) (Campylobacter pylori J99) protein is Nucleoside triphosphate pyrophosphatase.